The chain runs to 351 residues: DNA-directed RNA polymerase subunit alpha (351 aa).

The tract at residues Met-1–Asp-245 is alpha N-terminal domain (alpha-NTD). Residues Ala-261 to Ala-351 form an alpha C-terminal domain (alpha-CTD) region.

It belongs to the RNA polymerase alpha chain family. As to quaternary structure, homodimer. The RNAP catalytic core consists of 2 alpha, 1 beta, 1 beta' and 1 omega subunit. When a sigma factor is associated with the core the holoenzyme is formed, which can initiate transcription.

The catalysed reaction is RNA(n) + a ribonucleoside 5'-triphosphate = RNA(n+1) + diphosphate. DNA-dependent RNA polymerase catalyzes the transcription of DNA into RNA using the four ribonucleoside triphosphates as substrates. The protein is DNA-directed RNA polymerase subunit alpha of Treponema pallidum (strain Nichols).